Reading from the N-terminus, the 98-residue chain is MSLIHMNVMMAFSMSLVGLLMYRSHLMSALLCLEGMALSLFIFTTLTTLNLHFTLANMAPIILLVFTACEAAIGLALLVMISNTYGTDYVQSLNLLQC.

The next 3 membrane-spanning stretches (helical) occupy residues 1-21, 26-46, and 61-81; these read MSLIHMNVMMAFSMSLVGLLM, LMSALLCLEGMALSLFIFTTL, and IILLVFTACEAAIGLALLVMI.

It belongs to the complex I subunit 4L family. As to quaternary structure, core subunit of respiratory chain NADH dehydrogenase (Complex I) which is composed of 45 different subunits.

The protein localises to the mitochondrion inner membrane. The catalysed reaction is a ubiquinone + NADH + 5 H(+)(in) = a ubiquinol + NAD(+) + 4 H(+)(out). Functionally, core subunit of the mitochondrial membrane respiratory chain NADH dehydrogenase (Complex I) which catalyzes electron transfer from NADH through the respiratory chain, using ubiquinone as an electron acceptor. Part of the enzyme membrane arm which is embedded in the lipid bilayer and involved in proton translocation. In Physeter macrocephalus (Sperm whale), this protein is NADH-ubiquinone oxidoreductase chain 4L (MT-ND4L).